Reading from the N-terminus, the 575-residue chain is 2-succinyl-5-enolpyruvyl-6-hydroxy-3-cyclohexene-1-carboxylate synthase (575 aa).

Belongs to the TPP enzyme family. MenD subfamily. Homodimer. Mg(2+) serves as cofactor. The cofactor is Mn(2+). Thiamine diphosphate is required as a cofactor.

The catalysed reaction is isochorismate + 2-oxoglutarate + H(+) = 5-enolpyruvoyl-6-hydroxy-2-succinyl-cyclohex-3-ene-1-carboxylate + CO2. The protein operates within quinol/quinone metabolism; 1,4-dihydroxy-2-naphthoate biosynthesis; 1,4-dihydroxy-2-naphthoate from chorismate: step 2/7. Its pathway is quinol/quinone metabolism; menaquinone biosynthesis. Catalyzes the thiamine diphosphate-dependent decarboxylation of 2-oxoglutarate and the subsequent addition of the resulting succinic semialdehyde-thiamine pyrophosphate anion to isochorismate to yield 2-succinyl-5-enolpyruvyl-6-hydroxy-3-cyclohexene-1-carboxylate (SEPHCHC). The chain is 2-succinyl-5-enolpyruvyl-6-hydroxy-3-cyclohexene-1-carboxylate synthase from Syntrophus aciditrophicus (strain SB).